Reading from the N-terminus, the 63-residue chain is uncharacterized protein (63 aa).

This is an uncharacterized protein from Saccharomyces cerevisiae (strain ATCC 204508 / S288c) (Baker's yeast).